A 220-amino-acid chain; its full sequence is Ribosomal RNA large subunit methyltransferase E (220 aa).

The S-adenosyl-L-methionine site is built by G64, W66, D92, D108, and D133. The active-site Proton acceptor is K173.

It belongs to the class I-like SAM-binding methyltransferase superfamily. RNA methyltransferase RlmE family.

The protein localises to the cytoplasm. The catalysed reaction is uridine(2552) in 23S rRNA + S-adenosyl-L-methionine = 2'-O-methyluridine(2552) in 23S rRNA + S-adenosyl-L-homocysteine + H(+). Its function is as follows. Specifically methylates the uridine in position 2552 of 23S rRNA at the 2'-O position of the ribose in the fully assembled 50S ribosomal subunit. The polypeptide is Ribosomal RNA large subunit methyltransferase E (Acidovorax sp. (strain JS42)).